Here is a 325-residue protein sequence, read N- to C-terminus: Tetraacyldisaccharide 4'-kinase (325 aa).

55 to 62 (TAGGNGKT) contributes to the ATP binding site.

The protein belongs to the LpxK family.

It catalyses the reaction a lipid A disaccharide + ATP = a lipid IVA + ADP + H(+). It participates in glycolipid biosynthesis; lipid IV(A) biosynthesis; lipid IV(A) from (3R)-3-hydroxytetradecanoyl-[acyl-carrier-protein] and UDP-N-acetyl-alpha-D-glucosamine: step 6/6. In terms of biological role, transfers the gamma-phosphate of ATP to the 4'-position of a tetraacyldisaccharide 1-phosphate intermediate (termed DS-1-P) to form tetraacyldisaccharide 1,4'-bis-phosphate (lipid IVA). The sequence is that of Tetraacyldisaccharide 4'-kinase from Salmonella typhi.